Reading from the N-terminus, the 441-residue chain is Ribosomal protein uS12 methylthiotransferase RimO (441 aa).

The MTTase N-terminal domain maps to 7–117 (PKISFVSLGC…VLDAVHRAKP (111 aa)). 6 residues coordinate [4Fe-4S] cluster: Cys16, Cys52, Cys81, Cys148, Cys152, and Cys155. Residues 134 to 371 (LTPRHYAYLK…MARQQAISAR (238 aa)) form the Radical SAM core domain. The TRAM domain maps to 374 to 440 (KRKVGTRQQI…AYDLHGTVAG (67 aa)).

Belongs to the methylthiotransferase family. RimO subfamily. It depends on [4Fe-4S] cluster as a cofactor.

The protein resides in the cytoplasm. It carries out the reaction L-aspartate(89)-[ribosomal protein uS12]-hydrogen + (sulfur carrier)-SH + AH2 + 2 S-adenosyl-L-methionine = 3-methylsulfanyl-L-aspartate(89)-[ribosomal protein uS12]-hydrogen + (sulfur carrier)-H + 5'-deoxyadenosine + L-methionine + A + S-adenosyl-L-homocysteine + 2 H(+). Its function is as follows. Catalyzes the methylthiolation of an aspartic acid residue of ribosomal protein uS12. The polypeptide is Ribosomal protein uS12 methylthiotransferase RimO (Rhodopseudomonas palustris (strain HaA2)).